The sequence spans 206 residues: Imidazoleglycerol-phosphate dehydratase (206 aa).

The protein belongs to the imidazoleglycerol-phosphate dehydratase family.

It localises to the cytoplasm. The catalysed reaction is D-erythro-1-(imidazol-4-yl)glycerol 3-phosphate = 3-(imidazol-4-yl)-2-oxopropyl phosphate + H2O. The protein operates within amino-acid biosynthesis; L-histidine biosynthesis; L-histidine from 5-phospho-alpha-D-ribose 1-diphosphate: step 6/9. The protein is Imidazoleglycerol-phosphate dehydratase of Mycolicibacterium smegmatis (strain ATCC 700084 / mc(2)155) (Mycobacterium smegmatis).